A 242-amino-acid chain; its full sequence is Probable pectate lyase D (242 aa).

The first 17 residues, 1–17, serve as a signal peptide directing secretion; sequence MYQKSLLFSLLASSALA. N-linked (GlcNAc...) asparagine glycosylation occurs at Asn216. The tract at residues 217–242 is disordered; the sequence is DTGAEPEEISEGPSDACQYSEPLSSC.

This sequence belongs to the polysaccharide lyase 3 family. Requires Ca(2+) as cofactor.

Its subcellular location is the secreted. The catalysed reaction is Eliminative cleavage of (1-&gt;4)-alpha-D-galacturonan to give oligosaccharides with 4-deoxy-alpha-D-galact-4-enuronosyl groups at their non-reducing ends.. Its function is as follows. Pectinolytic enzyme consist of four classes of enzymes: pectin lyase, polygalacturonase, pectin methylesterase and rhamnogalacturonase. Among pectinolytic enzymes, pectin lyase is the most important in depolymerization of pectin, since it cleaves internal glycosidic bonds of highly methylated pectins. Favors pectate, the anion, over pectin, the methyl ester. This is Probable pectate lyase D (plyD) from Aspergillus fumigatus (strain CBS 144.89 / FGSC A1163 / CEA10) (Neosartorya fumigata).